The sequence spans 403 residues: Probable tubulin--tyrosine ligase C12B10.04 (403 aa).

The 378-residue stretch at 9 to 386 folds into the TTL domain; it reads KVYVNYRDEY…PFFESSTKRN (378 aa).

Belongs to the tubulin--tyrosine ligase family. Mg(2+) serves as cofactor. The cofactor is K(+).

Its subcellular location is the cytoplasm. It localises to the nucleus. The enzyme catalyses C-terminal L-alpha-aminoacyl-L-glutamyl-L-glutamyl-[tubulin] + L-tyrosine + ATP = C-terminal L-alpha-aminoacyl-L-glutamyl-L-glutamyl-L-tyrosyl-[tubulin] + ADP + phosphate + H(+). Probable tubulin--tyrosine ligase. This is Probable tubulin--tyrosine ligase C12B10.04 from Schizosaccharomyces pombe (strain 972 / ATCC 24843) (Fission yeast).